The chain runs to 185 residues: MAEERFPGWHGTTILAVRRGGEVVVAGDGQVSLGQTVIKGTARKVRRLSPGGHEVVAGFAGSTADAFTLLERLEKKLEAAPGQLARACVELAKDWRMDKYLRNLEAMLIVTDGETLLVLTGAGDVLEPEHDVTAIGSGGNFALAAARGLMATELPAEEIARKAMAIAADICVYTNGNLTVERISK.

Threonine 12 is a catalytic residue. Alanine 168, cysteine 171, and threonine 174 together coordinate Na(+).

This sequence belongs to the peptidase T1B family. HslV subfamily. As to quaternary structure, a double ring-shaped homohexamer of HslV is capped on each side by a ring-shaped HslU homohexamer. The assembly of the HslU/HslV complex is dependent on binding of ATP.

Its subcellular location is the cytoplasm. It carries out the reaction ATP-dependent cleavage of peptide bonds with broad specificity.. Its activity is regulated as follows. Allosterically activated by HslU binding. Its function is as follows. Protease subunit of a proteasome-like degradation complex believed to be a general protein degrading machinery. This chain is ATP-dependent protease subunit HslV, found in Cereibacter sphaeroides (strain KD131 / KCTC 12085) (Rhodobacter sphaeroides).